The following is a 250-amino-acid chain: DNA repair protein RecO (250 aa).

This sequence belongs to the RecO family.

Functionally, involved in DNA repair and RecF pathway recombination. The chain is DNA repair protein RecO from Rhodopseudomonas palustris (strain ATCC BAA-98 / CGA009).